The primary structure comprises 340 residues: MDQNRSPNGRDCREPPSPSSTARPGLVVIAGPTATGKSRQALLLAQRLGSPLLNADSRQVYREFDIGTAKPTPAERALWPHELIDFVDPRHTYTVAEFQQAAQARIAAAHRQGQTPILVGGTGLYIQSITAGLGIPAVPPQPQLRAQLETWPPEIRYAWLQQLDPVAAGQIHPHDEVRTLRALEIIYTTGKPASYLRQAHPPDYPILLLGLHCPMPRLEQRIARRTAEMLAAGWIEEVKTLRQRYGPDLPLLQTLGYAEIGAYLEGRIPAAELQPLIVRRTRQFAKRQMTWFRAMPGIQWLDCEAEDLPEQIWKRVTAWMAAQTSAGTTPAVAARPPADP.

A disordered region spans residues 1 to 25 (MDQNRSPNGRDCREPPSPSSTARPG). ATP is bound at residue 31-38 (GPTATGKS). Residue 33-38 (TATGKS) participates in substrate binding. The interval 56–59 (DSRQ) is interaction with substrate tRNA.

Belongs to the IPP transferase family. In terms of assembly, monomer. It depends on Mg(2+) as a cofactor.

It carries out the reaction adenosine(37) in tRNA + dimethylallyl diphosphate = N(6)-dimethylallyladenosine(37) in tRNA + diphosphate. Catalyzes the transfer of a dimethylallyl group onto the adenine at position 37 in tRNAs that read codons beginning with uridine, leading to the formation of N6-(dimethylallyl)adenosine (i(6)A). The protein is tRNA dimethylallyltransferase of Synechococcus sp. (strain JA-3-3Ab) (Cyanobacteria bacterium Yellowstone A-Prime).